A 302-amino-acid chain; its full sequence is Geranylgeranyl diphosphate synthase (302 aa).

Isopentenyl diphosphate is bound by residues K53, R56, and H87. Mg(2+)-binding residues include D94 and D100. R105 lines the (2E,6E)-farnesyl diphosphate pocket. R106 is a binding site for isopentenyl diphosphate. (2E,6E)-farnesyl diphosphate is bound by residues K189, T190, and Q227.

It belongs to the FPP/GGPP synthase family. The cofactor is Mg(2+).

The enzyme catalyses isopentenyl diphosphate + (2E,6E)-farnesyl diphosphate = (2E,6E,10E)-geranylgeranyl diphosphate + diphosphate. The protein operates within isoprenoid biosynthesis; geranylgeranyl diphosphate biosynthesis; geranylgeranyl diphosphate from farnesyl diphosphate and isopentenyl diphosphate: step 1/1. Functionally, catalyzes the condensation of farnesyl diphosphate (FPP) and isopentenyl diphosphate (IPP) to yield geranylgeranyl diphosphate (GGPP) needed for biosynthesis of carotenoids and diterpenes. This is Geranylgeranyl diphosphate synthase (crtE) from Pantoea ananas (Erwinia uredovora).